A 748-amino-acid chain; its full sequence is Catalase-peroxidase (748 aa).

Positions Met1 to Arg16 are enriched in polar residues. A disordered region spans residues Met1–Asp43. A cross-link (tryptophyl-tyrosyl-methioninium (Trp-Tyr) (with M-264)) is located at residues Trp113–Tyr238. The Proton acceptor role is filled by His114. The tryptophyl-tyrosyl-methioninium (Tyr-Met) (with W-113) cross-link spans Tyr238 to Met264. Residue His279 participates in heme b binding.

Belongs to the peroxidase family. Peroxidase/catalase subfamily. Homodimer or homotetramer. Requires heme b as cofactor. In terms of processing, formation of the three residue Trp-Tyr-Met cross-link is important for the catalase, but not the peroxidase activity of the enzyme.

The enzyme catalyses H2O2 + AH2 = A + 2 H2O. The catalysed reaction is 2 H2O2 = O2 + 2 H2O. Its function is as follows. Bifunctional enzyme with both catalase and broad-spectrum peroxidase activity. This Mycolicibacterium paratuberculosis (strain ATCC BAA-968 / K-10) (Mycobacterium paratuberculosis) protein is Catalase-peroxidase.